Reading from the N-terminus, the 197-residue chain is Ribonuclease HII (197 aa).

One can recognise an RNase H type-2 domain in the interval 4 to 197 (IWVCGVDEAG…VRKALESVAS (194 aa)). A divalent metal cation is bound by residues aspartate 10, glutamate 11, and aspartate 106.

Belongs to the RNase HII family. Mn(2+) is required as a cofactor. It depends on Mg(2+) as a cofactor.

The protein resides in the cytoplasm. It carries out the reaction Endonucleolytic cleavage to 5'-phosphomonoester.. Functionally, endonuclease that specifically degrades the RNA of RNA-DNA hybrids. The polypeptide is Ribonuclease HII (Polynucleobacter necessarius subsp. necessarius (strain STIR1)).